The primary structure comprises 333 residues: D-fructose 1,6-bisphosphatase class 2/sedoheptulose 1,7-bisphosphatase (333 aa).

Mn(2+) contacts are provided by aspartate 33, glutamate 57, aspartate 85, and glutamate 88. Substrate contacts are provided by residues 88–90, tyrosine 119, 164–166, and 186–188; these read EGT, RAR, and DGD. Residue glutamate 213 participates in Mn(2+) binding.

Belongs to the FBPase class 2 family. Homotetramer. The cofactor is Mn(2+).

It carries out the reaction beta-D-fructose 1,6-bisphosphate + H2O = beta-D-fructose 6-phosphate + phosphate. The catalysed reaction is D-sedoheptulose 1,7-bisphosphate + H2O = D-sedoheptulose 7-phosphate + phosphate. It participates in carbohydrate biosynthesis; Calvin cycle. Catalyzes the hydrolysis of fructose 1,6-bisphosphate (Fru 1,6-P2) and sedoheptulose 1,7-bisphosphate (Sed 1,7-P2) to fructose 6-phosphate and sedoheptulose 7-phosphate, respectively. In Prochlorococcus marinus subsp. pastoris (strain CCMP1986 / NIES-2087 / MED4), this protein is D-fructose 1,6-bisphosphatase class 2/sedoheptulose 1,7-bisphosphatase.